The sequence spans 152 residues: D-aminoacyl-tRNA deacylase (152 aa).

A Gly-cisPro motif, important for rejection of L-amino acids motif is present at residues 142-143 (GP).

The protein belongs to the DTD family. As to quaternary structure, homodimer.

The protein resides in the cytoplasm. It catalyses the reaction glycyl-tRNA(Ala) + H2O = tRNA(Ala) + glycine + H(+). The catalysed reaction is a D-aminoacyl-tRNA + H2O = a tRNA + a D-alpha-amino acid + H(+). In terms of biological role, an aminoacyl-tRNA editing enzyme that deacylates mischarged D-aminoacyl-tRNAs. Also deacylates mischarged glycyl-tRNA(Ala), protecting cells against glycine mischarging by AlaRS. Acts via tRNA-based rather than protein-based catalysis; rejects L-amino acids rather than detecting D-amino acids in the active site. By recycling D-aminoacyl-tRNA to D-amino acids and free tRNA molecules, this enzyme counteracts the toxicity associated with the formation of D-aminoacyl-tRNA entities in vivo and helps enforce protein L-homochirality. The chain is D-aminoacyl-tRNA deacylase from Burkholderia cenocepacia (strain HI2424).